The sequence spans 149 residues: Cytochrome c-type biogenesis protein CcmE (149 aa).

Residues 1 to 7 are Cytoplasmic-facing; the sequence is MKPRHKK. Residues 8–28 traverse the membrane as a helical; Signal-anchor for type II membrane protein segment; it reads MAVIALSVSALTVAVVLVLNA. Over 29-149 the chain is Periplasmic; it reads FQSNLVFFFS…AKAQKTSLAQ (121 aa). Heme contacts are provided by His-123 and Tyr-127.

This sequence belongs to the CcmE/CycJ family.

It localises to the cell inner membrane. Functionally, heme chaperone required for the biogenesis of c-type cytochromes. Transiently binds heme delivered by CcmC and transfers the heme to apo-cytochromes in a process facilitated by CcmF and CcmH. The chain is Cytochrome c-type biogenesis protein CcmE from Nitrosomonas europaea (strain ATCC 19718 / CIP 103999 / KCTC 2705 / NBRC 14298).